Here is a 152-residue protein sequence, read N- to C-terminus: Nucleoside diphosphate kinase (152 aa).

6 residues coordinate ATP: Lys-11, Phe-59, Arg-87, Thr-93, Arg-104, and Asn-114. Residue His-117 is the Pros-phosphohistidine intermediate of the active site.

The protein belongs to the NDK family. As to quaternary structure, homotetramer. Requires Mg(2+) as cofactor.

Its subcellular location is the cytoplasm. It carries out the reaction dZDP + ATP = dZTP + ADP. The enzyme catalyses a 2'-deoxyribonucleoside 5'-diphosphate + ATP = a 2'-deoxyribonucleoside 5'-triphosphate + ADP. The catalysed reaction is a ribonucleoside 5'-diphosphate + ATP = a ribonucleoside 5'-triphosphate + ADP. The protein operates within purine metabolism. Functionally, major role in the synthesis of nucleoside triphosphates other than ATP. The ATP gamma phosphate is transferred to the NDP beta phosphate via a ping-pong mechanism, using a phosphorylated active-site intermediate. Its function is as follows. (Microbial infection) Catalyzes the phosphorylation of dZDP to dZTP, when the bacterium is infected by a phage that produces the substrate for the synthesis of dZTP (2- amino-2'-deoxyadenosine 5'-triphosphate), which is then used by the phage as a DNA polymerase substrate. The protein is Nucleoside diphosphate kinase of Synechococcus sp. (strain CC9311).